Consider the following 209-residue polypeptide: Glycerol-3-phosphate acyltransferase (209 aa).

Transmembrane regions (helical) follow at residues 7–27 (IELAGIAGAYFLGSLSSAIIV), 85–105 (AIILVGFASFIGHLYPIFFGF), 117–137 (VMFGLSLPIGAAVAGTWLFVA), 142–162 (ISSLSALIATALAPLYIYLLA), and 166–183 (MAWVSVTAIMTLILFWRH).

Belongs to the PlsY family. Probably interacts with PlsX.

It is found in the cell inner membrane. The enzyme catalyses an acyl phosphate + sn-glycerol 3-phosphate = a 1-acyl-sn-glycero-3-phosphate + phosphate. It participates in lipid metabolism; phospholipid metabolism. Functionally, catalyzes the transfer of an acyl group from acyl-phosphate (acyl-PO(4)) to glycerol-3-phosphate (G3P) to form lysophosphatidic acid (LPA). This enzyme utilizes acyl-phosphate as fatty acyl donor, but not acyl-CoA or acyl-ACP. This is Glycerol-3-phosphate acyltransferase from Hydrogenovibrio crunogenus (strain DSM 25203 / XCL-2) (Thiomicrospira crunogena).